The primary structure comprises 115 residues: C-type natriuretic peptide prohormone (115 aa).

A disordered region spans residues 24–49 (PSDELNNEAEEMSPAASLPELNADQS). Cysteines 99 and 115 form a disulfide.

Belongs to the natriuretic peptide family. In terms of tissue distribution, CNP-115 is differentially processed to produce CNP-38 and CNP-39 in the heart and CNP-22 in the brain.

Its subcellular location is the secreted. Functionally, hormone which may be vasoactive and natriuretic. Has a cGMP-stimulating activity. This chain is C-type natriuretic peptide prohormone, found in Scyliorhinus canicula (Small-spotted catshark).